The following is a 420-amino-acid chain: Tol-Pal system protein TolB (420 aa).

A signal peptide spans 1–21 (MKLFVHLVLFISLFIPYFTKA).

The protein belongs to the TolB family. In terms of assembly, the Tol-Pal system is composed of five core proteins: the inner membrane proteins TolA, TolQ and TolR, the periplasmic protein TolB and the outer membrane protein Pal. They form a network linking the inner and outer membranes and the peptidoglycan layer.

It localises to the periplasm. Its function is as follows. Part of the Tol-Pal system, which plays a role in outer membrane invagination during cell division and is important for maintaining outer membrane integrity. The protein is Tol-Pal system protein TolB of Wolbachia sp. subsp. Drosophila simulans (strain wRi).